A 253-amino-acid chain; its full sequence is HTH-type transcriptional regulator YdeO (253 aa).

In terms of domain architecture, HTH araC/xylS-type spans 137–233 (GKVRNIVNMK…GNSPKRVSKE (97 aa)). DNA-binding regions (H-T-H motif) lie at residues 154 to 175 (KDIC…KQEQ) and 200 to 223 (VNKI…RKHF).

Functionally, induces the expression of gadE. Could also regulate the expression of other genes involved in acid resistance. The sequence is that of HTH-type transcriptional regulator YdeO (ydeO) from Shigella flexneri.